Reading from the N-terminus, the 497-residue chain is CRISPR-associated endodeoxyribonuclease Cas12f1 (497 aa).

Residues 29–122 (RKDLSTMSRF…PTYKITTAPI (94 aa)) form a recognition domain (REC) region. A wedge domain (WED) region spans residues 123–214 (RLQNNIYKLI…YCIIPYTFPT (92 aa)). The segment at 215 to 223 (HETVLDPDK) is linker. Residues 224–374 (VMGVDLGVAK…VAINPQYTSQ (151 aa)) form a ruvC-I region. Residues D228 and E327 contribute to the active site. Residues 375 to 432 (RCSMCGYIEKTNRSSQAVFECKQCGYGSRTICINCRHVQVSGDVCEECGGIVKKENVN) form a target nucleic acid-binding (TNB) region. Zn(2+) contacts are provided by C376, C379, C395, and C398. Positions 433 to 453 (ADYNAAKNISTPYIDQIIMEK) are ruvC-II. The active site involves D434.

Belongs to the CRISPR-associated endonuclease Cas12f family. As to quaternary structure, an asymmetric homodimer. Guide RNA is probably required for dimerization. It depends on Mg(2+) as a cofactor. The cofactor is Zn(2+).

In terms of biological role, CRISPR (clustered regularly interspaced short palindromic repeat), is an adaptive immune system that provides protection against mobile genetic elements (viruses, transposable elements and conjugative plasmids). CRISPR clusters contain sequences complementary to antecedent mobile elements and target invading nucleic acids. CRISPR clusters are transcribed and processed into CRISPR RNA (crRNA), which requires a trans-encoded small RNA (tracrRNA), but not this protein. Recognizes a short motif in the CRISPR repeat sequences (the 5' PAM or protospacer adjacent motif, TTC in this organism) to help distinguish self versus nonself, as targets within the CRISPR locus do not have PAMs. Has dsDNA endonuclease activity upon expression in E.coli of this protein, a mini CRISPR array and the probable tracrRNA. Plasmid cleavage is centered around positions 24 base pairs 3' of PAM. The mini system protects E.coli against transformation by foreign plasmids. The polypeptide is CRISPR-associated endodeoxyribonuclease Cas12f1 (Syntrophomonas palmitatica (strain DSM 18709 / JCM 14374 / NBRC 102128 / MPA)).